The following is a 277-amino-acid chain: Myelin proteolipid protein (277 aa).

At 2-10 (GLLECCARC) the chain is on the cytoplasmic side. Residues C6, C7, and C10 are each lipidated (S-palmitoyl cysteine). Residues 11–36 (LIGAPFASLVATGLCFFGVALFCGCG) form a helical membrane-spanning segment. The Extracellular segment spans residues 37-59 (HEALTGTEQLIETYFSKNYQDYE). Residues 60 to 88 (FLIDVIHGFQYFIYGTAAFFFLYGALLLA) form a helical membrane-spanning segment. Over 89–151 (EGFYTTGAVR…LGKWLGHPDK (63 aa)) the chain is Cytoplasmic. S-palmitoyl cysteine attachment occurs at residues C109, C139, and C141. A helical transmembrane segment spans residues 152–178 (FVGITYVLTIIWLLVFACSAVPVYIYF). Over 179-238 (NTWTTCQSIGNPTKTSASIGTLCADARMYGILPWNAFPGKVCGSNLLSICKTSEFQMTFH) the chain is Extracellular. 2 disulfides stabilise this stretch: C184/C228 and C201/C220. T199 carries O-palmitoyl threonine lipidation. The helical transmembrane segment at 239–268 (LFIAAFVGAAATLVSLVTFIIATTYNFAVL) threads the bilayer. Topologically, residues 269 to 277 (RLMGRGTKF) are cytoplasmic.

It belongs to the myelin proteolipid protein family.

It localises to the cell membrane. In terms of biological role, this is the major myelin protein from the central nervous system. It plays an important role in the formation or maintenance of the multilamellar structure of myelin. This is Myelin proteolipid protein (PLP1) from Taeniopygia guttata (Zebra finch).